The following is a 504-amino-acid chain: ATP synthase subunit alpha, chloroplastic (504 aa).

169–176 lines the ATP pocket; that stretch reads GDRQTGKT.

The protein belongs to the ATPase alpha/beta chains family. In terms of assembly, F-type ATPases have 2 components, CF(1) - the catalytic core - and CF(0) - the membrane proton channel. CF(1) has five subunits: alpha(3), beta(3), gamma(1), delta(1), epsilon(1). CF(0) has four main subunits: a, b, b' and c.

It is found in the plastid. Its subcellular location is the chloroplast thylakoid membrane. It carries out the reaction ATP + H2O + 4 H(+)(in) = ADP + phosphate + 5 H(+)(out). Produces ATP from ADP in the presence of a proton gradient across the membrane. The alpha chain is a regulatory subunit. This Stigeoclonium helveticum (Green alga) protein is ATP synthase subunit alpha, chloroplastic.